The chain runs to 422 residues: Glycine amidinotransferase, mitochondrial (422 aa).

A mitochondrion-targeting transit peptide spans 1-37; that stretch reads MLRVRCLRGGSRGAEAAHFIGSRLGRAFTGWVQRSLQ. Catalysis depends on residues aspartate 253 and histidine 302. Cysteine 406 serves as the catalytic Amidino-cysteine intermediate. Phosphothreonine is present on threonine 416.

Belongs to the amidinotransferase family. As to quaternary structure, homodimer.

The protein localises to the mitochondrion inner membrane. It carries out the reaction L-arginine + glycine = guanidinoacetate + L-ornithine. Its pathway is amine and polyamine biosynthesis; creatine biosynthesis; creatine from L-arginine and glycine: step 1/2. Functionally, catalyzes the biosynthesis of guanidinoacetate, the immediate precursor of creatine. Creatine plays a vital role in energy metabolism in muscle tissues. May play a role in embryonic and central nervous system development. In Gallus gallus (Chicken), this protein is Glycine amidinotransferase, mitochondrial.